Consider the following 426-residue polypeptide: MAFIALGINHKTASVEVRERVAFTPEQLVEALQQLCRLTPSREAAILSTCNRSELYLEQDQLSSDEVLKWLADYHRLSLDELRACAYVHSEQDAVRHMMRVACGLDSMVLGEPQILGQLKSAYAVAREAGTVGPLLGRLFQATFSTAKTVRTDTAIGENPVSVAFAAVSLAKQIFADLHRSQALLIGAGETISLVARHLHDQGIKRIVVANRTLERASQLAEQFGAHAVLLSDIPDELAHSDIVISSTASQLPILGKGAVESALKKRKHKPIFMVDIAVPRDIEPQVGELDDVYLYTVDDLHEVIEENLKSRQGAAQAAEELVAAGTEDFMQRLRELAAVDVLKAYRQQAERLRDEELAKAQRMLVNGASAEDVLAQLARGLTNKLLHAPSVRMKKLTAEGRIDALSLAQELFALDEGAPQDKGLQ.

Substrate is bound by residues 49–52 (TCNR), S107, 112–114 (EPQ), and Q118. C50 functions as the Nucleophile in the catalytic mechanism. 187-192 (GAGETI) contributes to the NADP(+) binding site.

Belongs to the glutamyl-tRNA reductase family. In terms of assembly, homodimer.

The catalysed reaction is (S)-4-amino-5-oxopentanoate + tRNA(Glu) + NADP(+) = L-glutamyl-tRNA(Glu) + NADPH + H(+). The protein operates within porphyrin-containing compound metabolism; protoporphyrin-IX biosynthesis; 5-aminolevulinate from L-glutamyl-tRNA(Glu): step 1/2. In terms of biological role, catalyzes the NADPH-dependent reduction of glutamyl-tRNA(Glu) to glutamate 1-semialdehyde (GSA). In Ectopseudomonas mendocina (strain ymp) (Pseudomonas mendocina), this protein is Glutamyl-tRNA reductase.